The sequence spans 247 residues: Glucosamine-6-phosphate deaminase (247 aa).

Catalysis depends on Asp-67, which acts as the Proton acceptor; for enolization step. Asn-136 serves as the catalytic For ring-opening step. The active-site Proton acceptor; for ring-opening step is His-138. Glu-143 acts as the For ring-opening step in catalysis.

The protein belongs to the glucosamine/galactosamine-6-phosphate isomerase family. NagB subfamily.

The catalysed reaction is alpha-D-glucosamine 6-phosphate + H2O = beta-D-fructose 6-phosphate + NH4(+). Its pathway is amino-sugar metabolism; N-acetylneuraminate degradation; D-fructose 6-phosphate from N-acetylneuraminate: step 5/5. In terms of biological role, catalyzes the reversible isomerization-deamination of glucosamine 6-phosphate (GlcN6P) to form fructose 6-phosphate (Fru6P) and ammonium ion. This chain is Glucosamine-6-phosphate deaminase, found in Shouchella clausii (strain KSM-K16) (Alkalihalobacillus clausii).